The following is a 203-amino-acid chain: Potassium channel Cha6605_3372 (203 aa).

Residues 1-7 (MVEAPEQ) are Cytoplasmic-facing. A helical transmembrane segment spans residues 8–31 (SETGRIEAFSDGVFAIAITLLVLE). The RxxxFSD motif motif lies at 12–18 (RIEAFSD). The Extracellular segment spans residues 32 to 52 (IKVPQHKIVETVGLVSSLLSL). Residues 37 to 42 (HKIVET) are short helix H1. The interval 44-50 (GLVSSLL) is short helix H2. A helical transmembrane segment spans residues 53–78 (WPSYLAFLTSFASILVMWVNHHRIFS). The Cytoplasmic segment spans residues 79–84 (LVARTD). The chain crosses the membrane as a helical span at residues 85–110 (HAFFYWNGLLLMLVTFVPFPTALLAE). Topologically, residues 111–117 (YLIHPQA) are extracellular. The helical transmembrane segment at 118 to 142 (RVAASVYAGIFLAIAIVFNRLWKHA) threads the bilayer. Residues 143–154 (ATADRLLAQKAD) are Cytoplasmic-facing. Residues 155 to 181 (RHEVDAITKQYRFGPGLYLVAFALSFI) form a helical membrane-spanning segment. Topologically, residues 182–183 (SV) are extracellular. A helical membrane pass occupies residues 184–199 (WLSVGVCFVLAIYFAL). Residues 200–203 (RSNA) are Cytoplasmic-facing.

The protein belongs to the TMEM175 family. Homotetramer.

It localises to the membrane. The enzyme catalyses K(+)(in) = K(+)(out). Functionally, potassium channel. The channel is permeable for K(+), Rb(+) and Cs(+), while it is unable to conduct Na(+). The polypeptide is Potassium channel Cha6605_3372 (Chamaesiphon minutus (strain ATCC 27169 / PCC 6605)).